Reading from the N-terminus, the 164-residue chain is Diphosphoinositol polyphosphate phosphohydrolase 3-alpha (164 aa).

Residues Arg9, 17–19, and 38–40 contribute to the substrate site; these read KKR and SSR. Positions 17–144 constitute a Nudix hydrolase domain; the sequence is KKRAACLCFR…VHAEYLEKLK (128 aa). Residues Gly49 and Glu65 each coordinate Mg(2+). Positions 50-71 match the Nudix box motif; sequence GGMEPEEEPDGAAVREVYEEAG. The active-site Proton acceptor is the Glu68. Glu69 lines the Mg(2+) pocket. Residues 89–91, Arg115, and Lys133 contribute to the substrate site; that span reads RKH. Residues 144-164 are disordered; that stretch reads KLGGSPTNGNSAAPSPPESEP.

Belongs to the Nudix hydrolase family. DIPP subfamily. Mg(2+) is required as a cofactor. Requires Mn(2+) as cofactor. As to expression, mainly expressed in testis, liver kidney and, at lower level, in heart, brain, spleen, lung and skeletal muscle.

It localises to the cytoplasm. It carries out the reaction diphospho-myo-inositol polyphosphate + H2O = myo-inositol polyphosphate + phosphate.. The catalysed reaction is P(1),P(6)-bis(5'-adenosyl) hexaphosphate + H2O = adenosine 5'-pentaphosphate + AMP + 2 H(+). The enzyme catalyses P(1),P(5)-bis(5'-adenosyl) pentaphosphate + H2O = adenosine 5'-tetraphosphate + AMP + 2 H(+). Functionally, cleaves a beta-phosphate from the diphosphate groups in PP-InsP5 (diphosphoinositol pentakisphosphate), suggesting that it may play a role in signal transduction. Also able to catalyze the hydrolysis of dinucleoside oligophosphates, with Ap6A and Ap5A being the preferred substrates. The major reaction products are ADP and p4a from Ap6A and ADP and ATP from Ap5A. Also able to hydrolyze 5-phosphoribose 1-diphosphate; however, the relevance of such activity in vivo remains unclear. This Mus musculus (Mouse) protein is Diphosphoinositol polyphosphate phosphohydrolase 3-alpha.